The sequence spans 249 residues: UPF0696 protein C11orf68 homolog (249 aa).

It belongs to the UPF0696 family.

This is UPF0696 protein C11orf68 homolog from Danio rerio (Zebrafish).